The primary structure comprises 769 residues: Cap-specific mRNA (nucleoside-2'-O-)-methyltransferase 2 (769 aa).

In terms of domain architecture, Adrift-type SAM-dependent 2'-O-MTase spans 109 to 322; that stretch reads ELCTQAWCKF…VYVVCLYYKG (214 aa). Lys-117 is an active-site residue. The S-adenosyl-L-methionine site is built by Gly-148, Trp-167, and Asp-235. Asp-235 is an active-site residue. Catalysis depends on Lys-275, which acts as the Proton acceptor.

The protein resides in the nucleus. Its subcellular location is the cytoplasm. The enzyme catalyses a 5'-end (N(7)-methyl 5'-triphosphoguanosine)-(2'-O-methyl-ribonucleoside)-(ribonucleotide) in mRNA + S-adenosyl-L-methionine = a 5'-end (N(7)-methyl 5'-triphosphoguanosine)-(2'-O-methyl-ribonucleoside)-(2'-O-methyl-ribonucleotide) in mRNA + S-adenosyl-L-homocysteine + H(+). In terms of biological role, S-adenosyl-L-methionine-dependent methyltransferase that mediates mRNA cap2 2'-O-ribose methylation to the 5'-cap structure of mRNAs. Methylates the ribose of the second nucleotide of a m(7)GpppG-capped mRNA and small nuclear RNA (snRNA) (cap0) to produce m(7)GpppRmpNm (cap2). Recognizes a guanosine cap on RNA independently of its N(7) methylation status. Display cap2 methylation on both cap0 and cap1. Displays a preference for cap1 RNAs. The polypeptide is Cap-specific mRNA (nucleoside-2'-O-)-methyltransferase 2 (CMTR2) (Pongo abelii (Sumatran orangutan)).